The following is a 41-amino-acid chain: uncharacterized protein (41 aa).

Positions 1-12 (MTRNVVRQEFEA) are enriched in basic and acidic residues. Residues 1–23 (MTRNVVRQEFEAPGKPQDSSQQD) are disordered.

This is an uncharacterized protein from Homo sapiens (Human).